Consider the following 501-residue polypeptide: MEIHTYEKEFFDLLKRISHYSEAVALMHWDSRTGAPKNGSEDRAESIGQLSTDIFNIQTSDRMKELIDVLYERFDDLSEDTKKAVELAKKEYEENKKIPEAEYKEYVILCSKAETAWEEAKGKSDFSLFSPYLEQLIEFNKRFITYWGYQEHPYDALLDLFEPGVTVKVLDQLFAELKEAIIPLVKQVTASGNKPDTSFITKAFPKEKQKELSLYFLQELGYDFDGGRLDETVHPFATTLNRGDVRVTTRYDEKDFRTAIFGTIHECGHAIYEQNIDEALSGTNLSDGASMGIHESQSLFYENFIGRNKHFWTPYYKKIQEASPVQFKDISLDDFVRAINESKPSFIRVEADELTYPLHIIIRYEIEKAIFSNEVSVEDLPSLWNQKYQDYLGITPQTDAEGILQDVHWAGGDFGYFPSYALGYMYAAQLKQKMLEDLPEFDALLERGEFHPIKQWLTEKVHIHGKRKKPLDIIKDATGEELNVRYLIDYLSNKYSNLYLL.

In terms of domain architecture, Peptidase M32 spans 3–496 (IHTYEKEFFD…LIDYLSNKYS (494 aa)). The HPF motif lies at 234–236 (HPF). A DXRXT motif is present at residues 244–248 (DVRVT). H265 is a binding site for Zn(2+). Positions 265-269 (HECGH) match the HEXXH motif. E266 (proton donor/acceptor) is an active-site residue. Zn(2+) contacts are provided by H269 and E295. Residues 294–297 (HESQ) carry the HES/GQ motif. Residues 347–352 (IRVEAD) carry the I/NRXXA/SD motif. The GXXQDXHW motif lies at 402 to 409 (GILQDVHW).

This sequence belongs to the peptidase M32 family. As to quaternary structure, homodimer. The cofactor is Zn(2+).

The enzyme catalyses Release of a C-terminal amino acid with broad specificity, except for -Pro.. Its function is as follows. Broad specificity carboxypetidase that releases amino acids sequentially from the C-terminus, including neutral, aromatic, polar and basic residues. Has lower activity with substrates ending with His or Trp. In Bacillus subtilis (strain 168), this protein is Carboxypeptidase 1 (ypwA).